We begin with the raw amino-acid sequence, 428 residues long: MSLHITSATEGQLQVHFTTKQKQYAVPDVPYSIRANVGCSELNTLLGTVLKDAGNKQGAKVAFDFLLNGEFVRSTLSQHLKERDISFEDTIELEYVERYPAPQPQDCLLHDDWVSAVQAKDGWILTGTYDNTVNLWNTKGKHKLTIPGHVAAVKGVAWISLNEQTGVFASASHDQTIMIWEWNMTTNTAECVHVCKGHERGVGCIAVNPAKTQMASGSMDTMLKIWSTELQADKGEPSATKKAKLEQDNVRTPVVTLAGHREFVSGVQWIDNTTIATCSWDHTIKLWDLSMGGIKTEFTGNKSFFDLSYSPLNGMIITASPDKNLRLYDPRSKHGNFVKNTYLGHSQWVQTCRWSTTNEYLFVSGAYDNRVKLWDYRSPKAPIFELIGHEDKVLACDWSNPKYILSGGSDNAVRVFKSRIAVDNTKDD.

The segment at 13-97 (LQVHFTTKQK…EDTIELEYVE (85 aa)) is ubiquitin-like (UBL) domain. 7 WD repeats span residues 109 to 146 (LHDDWVSAVQAKDGWILTGTYDNTVNLWNTKGKHKLTI), 148 to 190 (GHVA…NTAE), 197 to 236 (GHERGVGCIAVNPAKTQMASGSMDTMLKIWSTELQADKGE), 259 to 297 (GHREFVSGVQWIDNTTIATCSWDHTIKLWDLSMGGIKTE), 299 to 338 (TGNKSFFDLSYSPLNGMIITASPDKNLRLYDPRSKHGNFV), 344 to 384 (GHSQ…APIF), and 388 to 426 (GHEDKVLACDWSNPKYILSGGSDNAVRVFKSRIAVDNTK).

Belongs to the WD repeat WDR12/YTM1 family.

It localises to the nucleus. The protein localises to the nucleolus. It is found in the nucleoplasm. In terms of biological role, required for maturation of ribosomal RNAs and formation of the large ribosomal subunit. This Anopheles gambiae (African malaria mosquito) protein is Ribosome biogenesis protein WDR12 homolog.